The chain runs to 529 residues: Zinc finger protein 490 (529 aa).

A disordered region spans residues M1–Q53. A KRAB domain is found at I57–P132. 13 consecutive C2H2-type zinc fingers follow at residues C156–H178, H194–H216, Y222–H244, Y250–H272, Y278–H300, Y306–H328, F334–H356, Y362–H384, Y390–H412, Y418–H440, Y446–H468, C474–H496, and F502–H524.

It belongs to the krueppel C2H2-type zinc-finger protein family.

The protein localises to the nucleus. May be involved in transcriptional regulation. This chain is Zinc finger protein 490 (ZNF490), found in Homo sapiens (Human).